We begin with the raw amino-acid sequence, 159 residues long: SsrA-binding protein (159 aa).

The protein belongs to the SmpB family.

The protein localises to the cytoplasm. In terms of biological role, required for rescue of stalled ribosomes mediated by trans-translation. Binds to transfer-messenger RNA (tmRNA), required for stable association of tmRNA with ribosomes. tmRNA and SmpB together mimic tRNA shape, replacing the anticodon stem-loop with SmpB. tmRNA is encoded by the ssrA gene; the 2 termini fold to resemble tRNA(Ala) and it encodes a 'tag peptide', a short internal open reading frame. During trans-translation Ala-aminoacylated tmRNA acts like a tRNA, entering the A-site of stalled ribosomes, displacing the stalled mRNA. The ribosome then switches to translate the ORF on the tmRNA; the nascent peptide is terminated with the 'tag peptide' encoded by the tmRNA and targeted for degradation. The ribosome is freed to recommence translation, which seems to be the essential function of trans-translation. The sequence is that of SsrA-binding protein from Saccharophagus degradans (strain 2-40 / ATCC 43961 / DSM 17024).